A 503-amino-acid chain; its full sequence is Aromatase 2 (503 aa).

Residue Cys-437 participates in heme binding.

This sequence belongs to the cytochrome P450 family. Heme is required as a cofactor.

Its subcellular location is the membrane. It catalyses the reaction testosterone + 3 reduced [NADPH--hemoprotein reductase] + 3 O2 = 17beta-estradiol + formate + 3 oxidized [NADPH--hemoprotein reductase] + 4 H2O + 4 H(+). It carries out the reaction androst-4-ene-3,17-dione + 3 reduced [NADPH--hemoprotein reductase] + 3 O2 = estrone + formate + 3 oxidized [NADPH--hemoprotein reductase] + 4 H2O + 4 H(+). Functionally, catalyzes the formation of aromatic C18 estrogens from C19 androgens. The sequence is that of Aromatase 2 (CYP19A2) from Sus scrofa (Pig).